Consider the following 212-residue polypeptide: Cyclin-dependent kinase inhibitor 3 (212 aa).

The segment covering 1 to 12 has biased composition (polar residues); that stretch reads MKPPSSIQTSEF. The tract at residues 1-20 is disordered; the sequence is MKPPSSIQTSEFDSSDEEPI. The interaction with CDK2 stretch occupies residues 1–34; it reads MKPPSSIQTSEFDSSDEEPIEDEQTPIHISWLSL. The 169-residue stretch at 33–201 folds into the Tyrosine-protein phosphatase domain; the sequence is SLSRVNCSQF…FRDKLAAHLS (169 aa). Cys140 acts as the Phosphocysteine intermediate in catalysis.

The protein belongs to the protein-tyrosine phosphatase family. Interacts with cyclin-dependent kinases such as CDK1, CDK2 and CDK3. Does not interact with CDK4. Interacts (via C-terminus) with phosphorylated CDK2 (via C-terminal helix). Interacts with MS4A3 (via C-terminus); the interaction enhances CDKN3 enzymatic activity.

It localises to the cytoplasm. It is found in the perinuclear region. It catalyses the reaction O-phospho-L-tyrosyl-[protein] + H2O = L-tyrosyl-[protein] + phosphate. It carries out the reaction O-phospho-L-threonyl-[protein] + H2O = L-threonyl-[protein] + phosphate. The enzyme catalyses O-phospho-L-seryl-[protein] + H2O = L-seryl-[protein] + phosphate. Its function is as follows. May play a role in cell cycle regulation. Dual specificity CC phosphatase active toward substrates containing either phosphotyrosine or phosphoserine residues. Dephosphorylates CDK2 at 'Thr-160' in a cyclin-dependent manner. The sequence is that of Cyclin-dependent kinase inhibitor 3 from Homo sapiens (Human).